A 748-amino-acid chain; its full sequence is Catalase-peroxidase (748 aa).

The span at 1-16 (MSSDTSASRPPQPDTR) shows a compositional bias: polar residues. The interval 1 to 43 (MSSDTSASRPPQPDTRTASKSESENPAIPSPHPKSNAPLTNRD) is disordered. The tryptophyl-tyrosyl-methioninium (Trp-Tyr) (with M-264) cross-link spans 113 to 238 (WHAAGTYRIH…YGATTMGLIY (126 aa)). Catalysis depends on His114, which acts as the Proton acceptor. Residues 238–264 (YVNPEGPEGKPDPIAAAIDIRETFGRM) constitute a cross-link (tryptophyl-tyrosyl-methioninium (Tyr-Met) (with W-113)). His279 provides a ligand contact to heme b.

This sequence belongs to the peroxidase family. Peroxidase/catalase subfamily. Homodimer or homotetramer. Heme b serves as cofactor. Post-translationally, formation of the three residue Trp-Tyr-Met cross-link is important for the catalase, but not the peroxidase activity of the enzyme.

It carries out the reaction H2O2 + AH2 = A + 2 H2O. The enzyme catalyses 2 H2O2 = O2 + 2 H2O. Functionally, bifunctional enzyme with both catalase and broad-spectrum peroxidase activity. This chain is Catalase-peroxidase, found in Mycolicibacterium paratuberculosis (strain ATCC BAA-968 / K-10) (Mycobacterium paratuberculosis).